A 783-amino-acid chain; its full sequence is Tricorn protease-interacting factor F2 (783 aa).

Substrate is bound by residues E107 and 236 to 240 (GAMEN). H271 is a binding site for Zn(2+). Catalysis depends on E272, which acts as the Proton acceptor. Positions 275 and 294 each coordinate Zn(2+).

It belongs to the peptidase M1 family. As to quaternary structure, monomer. Part of the Tricorn proteolytic complex. Zn(2+) serves as cofactor.

The protein resides in the cytoplasm. In terms of biological role, proteases F1, F2 and F3 degrade oligopeptides produced by Tricorn (themselves probably produced by the proteasome), yielding free amino acids. In Thermoplasma volcanium (strain ATCC 51530 / DSM 4299 / JCM 9571 / NBRC 15438 / GSS1), this protein is Tricorn protease-interacting factor F2 (trf2).